We begin with the raw amino-acid sequence, 237 residues long: Purine nucleoside phosphorylase DeoD-type (237 aa).

A purine D-ribonucleoside is bound at residue H4. Phosphate is bound by residues G20, R24, R43, and 87–90 (RVGT). A purine D-ribonucleoside contacts are provided by residues 179-181 (EME) and 203-204 (SD). D204 serves as the catalytic Proton donor.

This sequence belongs to the PNP/UDP phosphorylase family. In terms of assembly, homohexamer; trimer of homodimers.

It catalyses the reaction a purine D-ribonucleoside + phosphate = a purine nucleobase + alpha-D-ribose 1-phosphate. The catalysed reaction is a purine 2'-deoxy-D-ribonucleoside + phosphate = a purine nucleobase + 2-deoxy-alpha-D-ribose 1-phosphate. Its function is as follows. Catalyzes the reversible phosphorolytic breakdown of the N-glycosidic bond in the beta-(deoxy)ribonucleoside molecules, with the formation of the corresponding free purine bases and pentose-1-phosphate. This is Purine nucleoside phosphorylase DeoD-type from Streptococcus pyogenes serotype M4 (strain MGAS10750).